The primary structure comprises 299 residues: Bifunctional protein FolD (299 aa).

Residues 179-181 and Ile245 contribute to the NADP(+) site; that span reads GPG.

The protein belongs to the tetrahydrofolate dehydrogenase/cyclohydrolase family. In terms of assembly, homodimer.

It catalyses the reaction (6R)-5,10-methylene-5,6,7,8-tetrahydrofolate + NADP(+) = (6R)-5,10-methenyltetrahydrofolate + NADPH. The enzyme catalyses (6R)-5,10-methenyltetrahydrofolate + H2O = (6R)-10-formyltetrahydrofolate + H(+). The protein operates within one-carbon metabolism; tetrahydrofolate interconversion. Functionally, catalyzes the oxidation of 5,10-methylenetetrahydrofolate to 5,10-methenyltetrahydrofolate and then the hydrolysis of 5,10-methenyltetrahydrofolate to 10-formyltetrahydrofolate. The polypeptide is Bifunctional protein FolD (Deinococcus radiodurans (strain ATCC 13939 / DSM 20539 / JCM 16871 / CCUG 27074 / LMG 4051 / NBRC 15346 / NCIMB 9279 / VKM B-1422 / R1)).